The sequence spans 160 residues: Nucleotide-binding protein Bpet3698 (160 aa).

It belongs to the YajQ family.

Nucleotide-binding protein. The sequence is that of Nucleotide-binding protein Bpet3698 from Bordetella petrii (strain ATCC BAA-461 / DSM 12804 / CCUG 43448).